The following is a 280-amino-acid chain: MRGVKLPRLVPSRPVPPPPAAPGEVLAAAGGLRVHLGGRPVLDGVDVEVRAGEVLALVGPNGAGKSTLLGALAADVPAAEGVVRVHGRPVSDWSAPELALRRAVLPQSASLSFPFAVEEVVRMGRAPWAGGDRADEDEAAVAEAMARTEVAGFAGRPFSALSGGERARVALARVLAQRAPLLLLDEPTAALDLRHQELVLRLCRERARAGDAVVVVLHDLALAAAYADRVALLRSGRIAAGGPPSEVFAQGLLSEVYDQPVEVFPHPRTGALLVVPHRSP.

In terms of domain architecture, ABC transporter spans 26 to 260 (LAAAGGLRVH…GLLSEVYDQP (235 aa)). 59 to 66 (GPNGAGKS) is an ATP binding site.

The protein belongs to the ABC transporter superfamily. Heme (hemin) importer (TC 3.A.1.14.5) family. In terms of assembly, the complex is composed of two ATP-binding proteins (HmuV), two transmembrane proteins (HmuU) and a solute-binding protein (HmuT).

It is found in the cell membrane. Part of the ABC transporter complex HmuTUV involved in hemin import. Responsible for energy coupling to the transport system. The polypeptide is Hemin import ATP-binding protein HmuV (Streptomyces coelicolor (strain ATCC BAA-471 / A3(2) / M145)).